A 217-amino-acid chain; its full sequence is Pre-mRNA-splicing factor sap62 (217 aa).

The Matrin-type zinc finger occupies 54 to 84; it reads FECRLCLTTHANENSYLTHTQGKKHQTNLAR.

This sequence belongs to the SF3A2 family. As to quaternary structure, belongs to the 40S cdc5-associated complex (or cwf complex), a spliceosome sub-complex reminiscent of a late-stage spliceosome composed of the U2, U5 and U6 snRNAs and at least brr2, cdc5, cwf2/prp3, cwf3/syf1, cwf4/syf3, cwf5/ecm2, spp42/cwf6, cwf7/spf27, cwf8, cwf9, cwf10, cwf11, cwf12, prp45/cwf13, cwf14, cwf15, cwf16, cwf17, cwf18, cwf19, cwf20, cwf21, cwf22, cwf23, cwf24, cwf25, cwf26, cyp7/cwf27, cwf28, cwf29/ist3, lea1, msl1, prp5/cwf1, prp10, prp12/sap130, prp17, prp22, sap61, sap62, sap114, sap145, slu7, smb1, smd1, smd3, smf1, smg1 and syf2.

The protein resides in the nucleus. Its subcellular location is the cytoplasm. Involved in mRNA splicing where it associates with cdc5 and the other cwf proteins as part of the spliceosome. This Schizosaccharomyces pombe (strain 972 / ATCC 24843) (Fission yeast) protein is Pre-mRNA-splicing factor sap62 (sap62).